The sequence spans 385 residues: Arginine biosynthesis bifunctional protein ArgJ (385 aa).

Residues threonine 142, lysine 168, threonine 179, glutamate 259, asparagine 380, and threonine 385 each coordinate substrate. Threonine 179 serves as the catalytic Nucleophile.

The protein belongs to the ArgJ family. Heterotetramer of two alpha and two beta chains.

The protein resides in the cytoplasm. The enzyme catalyses N(2)-acetyl-L-ornithine + L-glutamate = N-acetyl-L-glutamate + L-ornithine. It catalyses the reaction L-glutamate + acetyl-CoA = N-acetyl-L-glutamate + CoA + H(+). It functions in the pathway amino-acid biosynthesis; L-arginine biosynthesis; L-ornithine and N-acetyl-L-glutamate from L-glutamate and N(2)-acetyl-L-ornithine (cyclic): step 1/1. It participates in amino-acid biosynthesis; L-arginine biosynthesis; N(2)-acetyl-L-ornithine from L-glutamate: step 1/4. Catalyzes two activities which are involved in the cyclic version of arginine biosynthesis: the synthesis of N-acetylglutamate from glutamate and acetyl-CoA as the acetyl donor, and of ornithine by transacetylation between N(2)-acetylornithine and glutamate. The protein is Arginine biosynthesis bifunctional protein ArgJ of Leptospira interrogans serogroup Icterohaemorrhagiae serovar copenhageni (strain Fiocruz L1-130).